A 152-amino-acid polypeptide reads, in one-letter code: Large ribosomal subunit protein bL9 (152 aa).

Belongs to the bacterial ribosomal protein bL9 family.

In terms of biological role, binds to the 23S rRNA. The chain is Large ribosomal subunit protein bL9 from Coxiella burnetii (strain RSA 331 / Henzerling II).